The primary structure comprises 403 residues: L-cysteine:1D-myo-inositol 2-amino-2-deoxy-alpha-D-glucopyranoside ligase (403 aa).

Cysteine 43 lines the Zn(2+) pocket. Residues 43–46 (CGIT), threonine 58, and 81–83 (NTT) contribute to the L-cysteinyl-5'-AMP site. The 'HIGH' region signature appears at 45–55 (ITPYDATHLGH). A 'ERGGDP' region motif is present at residues 183 to 188 (ERGGDP). Position 223 (tryptophan 223) interacts with L-cysteinyl-5'-AMP. Cysteine 227 is a binding site for Zn(2+). An L-cysteinyl-5'-AMP-binding site is contributed by 245–247 (GSD). Residue histidine 252 coordinates Zn(2+). Valine 279 provides a ligand contact to L-cysteinyl-5'-AMP. The 'KMSKS' region motif lies at 285 to 289 (KMSKS).

It belongs to the class-I aminoacyl-tRNA synthetase family. MshC subfamily. In terms of assembly, monomer. The cofactor is Zn(2+).

The enzyme catalyses 1D-myo-inositol 2-amino-2-deoxy-alpha-D-glucopyranoside + L-cysteine + ATP = 1D-myo-inositol 2-(L-cysteinylamino)-2-deoxy-alpha-D-glucopyranoside + AMP + diphosphate + H(+). Catalyzes the ATP-dependent condensation of GlcN-Ins and L-cysteine to form L-Cys-GlcN-Ins. This Thermobispora bispora (strain ATCC 19993 / DSM 43833 / CBS 139.67 / JCM 10125 / KCTC 9307 / NBRC 14880 / R51) protein is L-cysteine:1D-myo-inositol 2-amino-2-deoxy-alpha-D-glucopyranoside ligase.